Here is a 297-residue protein sequence, read N- to C-terminus: Ribosomal RNA small subunit methyltransferase A (297 aa).

Residues asparagine 31, leucine 33, glycine 58, glutamate 79, aspartate 104, and asparagine 129 each coordinate S-adenosyl-L-methionine.

This sequence belongs to the class I-like SAM-binding methyltransferase superfamily. rRNA adenine N(6)-methyltransferase family. RsmA subfamily.

The protein resides in the cytoplasm. The enzyme catalyses adenosine(1518)/adenosine(1519) in 16S rRNA + 4 S-adenosyl-L-methionine = N(6)-dimethyladenosine(1518)/N(6)-dimethyladenosine(1519) in 16S rRNA + 4 S-adenosyl-L-homocysteine + 4 H(+). In terms of biological role, specifically dimethylates two adjacent adenosines (A1518 and A1519) in the loop of a conserved hairpin near the 3'-end of 16S rRNA in the 30S particle. May play a critical role in biogenesis of 30S subunits. This Staphylococcus aureus (strain Mu3 / ATCC 700698) protein is Ribosomal RNA small subunit methyltransferase A.